Consider the following 327-residue polypeptide: GMP reductase (327 aa).

Cysteine 176 (thioimidate intermediate) is an active-site residue. 205–228 (IIADGGIRTHGDIAKSIRFGASMV) lines the NADP(+) pocket.

The protein belongs to the IMPDH/GMPR family. GuaC type 2 subfamily.

It carries out the reaction IMP + NH4(+) + NADP(+) = GMP + NADPH + 2 H(+). Catalyzes the irreversible NADPH-dependent deamination of GMP to IMP. It functions in the conversion of nucleobase, nucleoside and nucleotide derivatives of G to A nucleotides, and in maintaining the intracellular balance of A and G nucleotides. This is GMP reductase from Streptococcus pyogenes serotype M3 (strain ATCC BAA-595 / MGAS315).